A 522-amino-acid polypeptide reads, in one-letter code: Terpineol synthase, chloroplastic (522 aa).

Residues arginine 242, aspartate 279, aspartate 283, arginine 414, and asparagine 417 each coordinate (2E)-geranyl diphosphate. 2 residues coordinate Mg(2+): aspartate 279 and aspartate 283. Positions 279–283 match the DDXXD motif motif; sequence DDVYD. The Mg(2+) site is built by asparagine 417, threonine 421, and glutamate 425.

Belongs to the terpene synthase family. Tpsb subfamily. As to quaternary structure, monomer. Mg(2+) is required as a cofactor. Mn(2+) serves as cofactor. In terms of tissue distribution, confined to flowers.

It is found in the plastid. Its subcellular location is the chloroplast. It carries out the reaction (2E)-geranyl diphosphate + H2O = (S)-alpha-terpineol + diphosphate. It catalyses the reaction (2E)-geranyl diphosphate = sabinene + diphosphate. The catalysed reaction is (2E)-geranyl diphosphate = beta-myrcene + diphosphate. The enzyme catalyses (2E)-geranyl diphosphate = limonene + diphosphate. It carries out the reaction (2E)-geranyl diphosphate + H2O = 1,8-cineole + diphosphate. It catalyses the reaction (2E)-geranyl diphosphate = alpha-pinene + diphosphate. The protein operates within secondary metabolite biosynthesis; terpenoid biosynthesis. Functionally, monoterpene synthase (TPS) involved in the biosynthesis of monoterpene natural products of the 'cineole cassette', volatile compounds present in floral scent. Catalyzes the conversion of (2E)-geranyl diphosphate (GPP) into alpha-terpineol and, as minor products, sabinene, beta-myrcene, limonene, alpha-pinene and 1,8-cineole. This is Terpineol synthase, chloroplastic from Nicotiana langsdorffii (Langsdorff's tobacco).